A 91-amino-acid chain; its full sequence is Small ribosomal subunit protein uS15 (91 aa).

This sequence belongs to the universal ribosomal protein uS15 family. As to quaternary structure, part of the 30S ribosomal subunit. Forms a bridge to the 50S subunit in the 70S ribosome, contacting the 23S rRNA.

One of the primary rRNA binding proteins, it binds directly to 16S rRNA where it helps nucleate assembly of the platform of the 30S subunit by binding and bridging several RNA helices of the 16S rRNA. Its function is as follows. Forms an intersubunit bridge (bridge B4) with the 23S rRNA of the 50S subunit in the ribosome. This Rickettsia canadensis (strain McKiel) protein is Small ribosomal subunit protein uS15.